A 614-amino-acid chain; its full sequence is Zinc metalloproteinase-disintegrin-like VLAIP-B (614 aa).

An N-terminal signal peptide occupies residues 1–20 (MMQVLLVTICLAVFPYQGSS). A propeptide spanning residues 21 to 193 (IILESGNVND…KASQLNLTPE (173 aa)) is cleaved from the precursor. Gln-194 bears the Pyrrolidone carboxylic acid mark. The Peptidase M12B domain occupies 202 to 398 (KYVELVIVAD…KMPQCILNKP (197 aa)). Glu-205 is a binding site for Ca(2+). A glycan (N-linked (GlcNAc...) asparagine) is linked at Asn-262. Position 289 (Asp-289) interacts with Ca(2+). 3 disulfides stabilise this stretch: Cys-313-Cys-393, Cys-353-Cys-377, and Cys-355-Cys-360. His-338 contributes to the Zn(2+) binding site. Glu-339 is a catalytic residue. 2 residues coordinate Zn(2+): His-342 and His-348. Ca(2+) contacts are provided by Cys-393, Asn-396, Val-408, Asn-411, Phe-413, Glu-415, Glu-418, and Asp-421. The 87-residue stretch at 406 to 492 (PAVCGNYFVE…ECPTDQFQRN (87 aa)) folds into the Disintegrin domain. Disulfide bonds link Cys-409–Cys-438, Cys-420–Cys-433, Cys-422–Cys-428, Cys-432–Cys-455, Cys-446–Cys-452, Cys-451–Cys-477, Cys-464–Cys-484, Cys-471–Cys-503, Cys-496–Cys-508, Cys-515–Cys-565, Cys-530–Cys-576, Cys-543–Cys-553, Cys-560–Cys-602, and Cys-596–Cys-607. A D/ECD-tripeptide motif is present at residues 470–472 (ECD). N-linked (GlcNAc...) asparagine glycosylation is found at Asn-505, Asn-547, and Asn-568.

This sequence belongs to the venom metalloproteinase (M12B) family. P-III subfamily. P-IIIc sub-subfamily. As to quaternary structure, heterodimer; disulfide-linked. It depends on Zn(2+) as a cofactor. In terms of processing, the N-terminus is blocked. As to expression, expressed by the venom gland.

The protein resides in the secreted. Its activity is regulated as follows. Inhibited by EDTA or 1,10-phenanthroline. Not inhibited by PMSF. In terms of biological role, this metalloproteinase hydrolyzes azocasein, and insulin B-chain (at the '38-Ala-|-Leu-39' bond). Also hydrolyzes the Aalpha-chain (FGA) and more slowly the Bbeta-chain of fibrinogen (FGB), without affecting the gamma-chain. Cleaves alpha-chain of fibrinogen at '432-Lys-|-Leu-433' and '535-Pro-|-Met-536' bonds. Does not cleave fibrin. Inhibits endothelial cell adhesion to extracellular matrix proteins such as fibrinogen, fibronectin, vitronectin, collagen I, and collagen IV. Induces apoptosis in vascular endothelial cells. The polypeptide is Zinc metalloproteinase-disintegrin-like VLAIP-B (Macrovipera lebetinus (Levantine viper)).